Here is a 196-residue protein sequence, read N- to C-terminus: Imidazoleglycerol-phosphate dehydratase (196 aa).

The protein belongs to the imidazoleglycerol-phosphate dehydratase family.

It is found in the cytoplasm. It catalyses the reaction D-erythro-1-(imidazol-4-yl)glycerol 3-phosphate = 3-(imidazol-4-yl)-2-oxopropyl phosphate + H2O. Its pathway is amino-acid biosynthesis; L-histidine biosynthesis; L-histidine from 5-phospho-alpha-D-ribose 1-diphosphate: step 6/9. This Desulforamulus reducens (strain ATCC BAA-1160 / DSM 100696 / MI-1) (Desulfotomaculum reducens) protein is Imidazoleglycerol-phosphate dehydratase.